The primary structure comprises 79 residues: Acyl carrier protein (79 aa).

The Carrier domain maps to 6–79 (KEILDGLAEI…VQDVINYIQK (74 aa)). Residue serine 41 is modified to O-(pantetheine 4'-phosphoryl)serine.

Belongs to the acyl carrier protein (ACP) family. In terms of processing, 4'-phosphopantetheine is transferred from CoA to a specific serine of apo-ACP by AcpS. This modification is essential for activity because fatty acids are bound in thioester linkage to the sulfhydryl of the prosthetic group.

The protein resides in the cytoplasm. Its pathway is lipid metabolism; fatty acid biosynthesis. Its function is as follows. Carrier of the growing fatty acid chain in fatty acid biosynthesis. This Thermobifida fusca (strain YX) protein is Acyl carrier protein.